The sequence spans 392 residues: Erythronate-4-phosphate dehydrogenase (392 aa).

Residues Ser-48 and Thr-69 each coordinate substrate. Asp-149 contributes to the NAD(+) binding site. Arg-215 is an active-site residue. An NAD(+)-binding site is contributed by Asp-239. The active site involves Glu-244. His-261 functions as the Proton donor in the catalytic mechanism. Gly-264 lines the NAD(+) pocket. Position 265 (Tyr-265) interacts with substrate.

This sequence belongs to the D-isomer specific 2-hydroxyacid dehydrogenase family. PdxB subfamily. Homodimer.

The protein localises to the cytoplasm. The enzyme catalyses 4-phospho-D-erythronate + NAD(+) = (R)-3-hydroxy-2-oxo-4-phosphooxybutanoate + NADH + H(+). Its pathway is cofactor biosynthesis; pyridoxine 5'-phosphate biosynthesis; pyridoxine 5'-phosphate from D-erythrose 4-phosphate: step 2/5. Its function is as follows. Catalyzes the oxidation of erythronate-4-phosphate to 3-hydroxy-2-oxo-4-phosphonooxybutanoate. The protein is Erythronate-4-phosphate dehydrogenase of Salinibacter ruber (strain DSM 13855 / M31).